The sequence spans 375 residues: Aminomethyltransferase (375 aa).

The protein belongs to the GcvT family. In terms of assembly, the glycine cleavage system is composed of four proteins: P, T, L and H.

It carries out the reaction N(6)-[(R)-S(8)-aminomethyldihydrolipoyl]-L-lysyl-[protein] + (6S)-5,6,7,8-tetrahydrofolate = N(6)-[(R)-dihydrolipoyl]-L-lysyl-[protein] + (6R)-5,10-methylene-5,6,7,8-tetrahydrofolate + NH4(+). The glycine cleavage system catalyzes the degradation of glycine. The chain is Aminomethyltransferase from Cupriavidus taiwanensis (strain DSM 17343 / BCRC 17206 / CCUG 44338 / CIP 107171 / LMG 19424 / R1) (Ralstonia taiwanensis (strain LMG 19424)).